The primary structure comprises 166 residues: Putative tRNA (cytidine(34)-2'-O)-methyltransferase (166 aa).

4 residues coordinate S-adenosyl-L-methionine: L83, G109, I130, and S138.

This sequence belongs to the class IV-like SAM-binding methyltransferase superfamily. RNA methyltransferase TrmH family. TrmL subfamily.

Its subcellular location is the cytoplasm. It catalyses the reaction cytidine(34) in tRNA + S-adenosyl-L-methionine = 2'-O-methylcytidine(34) in tRNA + S-adenosyl-L-homocysteine + H(+). The catalysed reaction is 5-carboxymethylaminomethyluridine(34) in tRNA(Leu) + S-adenosyl-L-methionine = 5-carboxymethylaminomethyl-2'-O-methyluridine(34) in tRNA(Leu) + S-adenosyl-L-homocysteine + H(+). Could methylate the ribose at the nucleotide 34 wobble position in tRNA. This chain is Putative tRNA (cytidine(34)-2'-O)-methyltransferase, found in Mycoplasma pneumoniae (strain ATCC 29342 / M129 / Subtype 1) (Mycoplasmoides pneumoniae).